Here is a 139-residue protein sequence, read N- to C-terminus: Protein archease (139 aa).

The Ca(2+) site is built by Asp12, Asp138, and Ile139.

The protein belongs to the archease family.

Functionally, activates the tRNA-splicing ligase complex by facilitating the enzymatic turnover of catalytic subunit RtcB. Acts by promoting the guanylylation of RtcB, a key intermediate step in tRNA ligation. Can also alter the NTP specificity of RtcB such that ATP, dGTP or ITP is used efficiently. The polypeptide is Protein archease (Saccharolobus islandicus (strain Y.N.15.51 / Yellowstone #2) (Sulfolobus islandicus)).